The sequence spans 406 residues: Argininosuccinate synthase (406 aa).

Residues 11–19 (AYSGGLDTS) and Ala-38 contribute to the ATP site. The L-citrulline site is built by Tyr-91 and Ser-96. Gly-121 is a binding site for ATP. L-aspartate is bound by residues Thr-123, Asn-127, and Asp-128. Position 127 (Asn-127) interacts with L-citrulline. Residues Arg-131, Ser-181, Ser-190, Glu-266, and Tyr-278 each coordinate L-citrulline.

It belongs to the argininosuccinate synthase family. Type 1 subfamily. As to quaternary structure, homotetramer.

It localises to the cytoplasm. The enzyme catalyses L-citrulline + L-aspartate + ATP = 2-(N(omega)-L-arginino)succinate + AMP + diphosphate + H(+). Its pathway is amino-acid biosynthesis; L-arginine biosynthesis; L-arginine from L-ornithine and carbamoyl phosphate: step 2/3. The sequence is that of Argininosuccinate synthase from Campylobacter lari (strain RM2100 / D67 / ATCC BAA-1060).